Here is a 462-residue protein sequence, read N- to C-terminus: Proteases secretion protein PrtF (462 aa).

The first 23 residues, Met-1–Gly-23, serve as a signal peptide directing secretion.

This sequence belongs to the outer membrane factor (OMF) (TC 1.B.17) family.

It localises to the cell outer membrane. Functionally, involved in the secretion of proteases A, B, C and G. This is Proteases secretion protein PrtF (prtF) from Dickeya chrysanthemi (Pectobacterium chrysanthemi).